A 341-amino-acid chain; its full sequence is UDP-3-O-(3-hydroxymyristoyl)glucosamine N-acyltransferase (341 aa).

His239 acts as the Proton acceptor in catalysis.

It belongs to the transferase hexapeptide repeat family. LpxD subfamily. In terms of assembly, homotrimer.

It catalyses the reaction a UDP-3-O-[(3R)-3-hydroxyacyl]-alpha-D-glucosamine + a (3R)-hydroxyacyl-[ACP] = a UDP-2-N,3-O-bis[(3R)-3-hydroxyacyl]-alpha-D-glucosamine + holo-[ACP] + H(+). It carries out the reaction UDP-3-O-[(3R)-3-hydroxytetradecanoyl]-alpha-D-glucosamine + (3R)-hydroxytetradecanoyl-[ACP] = UDP-2-N,3-O-bis[(3R)-3-hydroxytetradecanoyl]-alpha-D-glucosamine + holo-[ACP] + H(+). The protein operates within glycolipid biosynthesis; lipid IV(A) biosynthesis; lipid IV(A) from (3R)-3-hydroxytetradecanoyl-[acyl-carrier-protein] and UDP-N-acetyl-alpha-D-glucosamine: step 3/6. In terms of biological role, catalyzes the N-acylation of UDP-3-O-(hydroxytetradecanoyl)glucosamine using 3-hydroxytetradecanoyl-ACP as the acyl donor. Is involved in the biosynthesis of lipid A, a phosphorylated glycolipid that anchors the lipopolysaccharide to the outer membrane of the cell. The protein is UDP-3-O-(3-hydroxymyristoyl)glucosamine N-acyltransferase of Salmonella choleraesuis (strain SC-B67).